Here is a 348-residue protein sequence, read N- to C-terminus: Phosphate acyltransferase (348 aa).

This sequence belongs to the PlsX family. Homodimer. Probably interacts with PlsY.

The protein localises to the cytoplasm. The catalysed reaction is a fatty acyl-[ACP] + phosphate = an acyl phosphate + holo-[ACP]. It functions in the pathway lipid metabolism; phospholipid metabolism. In terms of biological role, catalyzes the reversible formation of acyl-phosphate (acyl-PO(4)) from acyl-[acyl-carrier-protein] (acyl-ACP). This enzyme utilizes acyl-ACP as fatty acyl donor, but not acyl-CoA. In Leuconostoc citreum (strain KM20), this protein is Phosphate acyltransferase.